The sequence spans 1403 residues: Baculoviral IAP repeat-containing protein 1f (1403 aa).

3 BIR repeats span residues 60–127 (EAKR…CEFL), 159–227 (EEAR…CEFL), and 278–345 (EELR…CVFL). Zn(2+) is bound by residues cysteine 315, cysteine 318, histidine 335, and cysteine 342. Residues 464-759 (SVMCVEGEAG…EFLAAVRLTE (296 aa)) enclose the NACHT domain. Residue 473 to 478 (GSGKTT) coordinates ATP.

Component of the NLRC4 inflammasome, at least composed of NLRC4, caspase-1 (CASP1) and some NAIP protein. As to quaternary structure, (Microbial infection) Interacts with S.typhimurium (Salmonella) flagellin.

Sensor component of the NLRC4 inflammasome that specifically recognizes and binds flagellin from pathogenic bacteria. Association of pathogenic bacteria proteins drives in turn drive assembly and activation of the NLRC4 inflammasome, promoting caspase-1 activation, cytokine production and macrophage pyroptosis. The NLRC4 inflammasome is activated as part of the innate immune response to a range of intracellular bacteria. The NLRC4 inflammasome senses Gram-negative bacteria such as L.pneumophila and P.aeruginosa, enteric pathogens S.typhimurium (Salmonella) and S.flexneri. May contribute to prevent motor-neuron apoptosis induced by a variety of signals. The polypeptide is Baculoviral IAP repeat-containing protein 1f (Naip6) (Mus musculus (Mouse)).